A 641-amino-acid chain; its full sequence is MSTGAQTKAAAASQHADGPRLLADVGGTNARFALETGPGEITQIRVYPGAEYPTLTDAIRKYLKDAKIGRVNHAAIAIANPVDGDQVRMTNHNWSFSIEATRRALGFDTLLVVNDFTALAMALPGLTDAQRVQIGGGTRRQNSVIGLMGPGTGLGVSGLIPADDRWIALGSEGGHATFAPMDEREDLVLQYARRKYPHVSFERVCAGPGMEIIYRALAARDKKRIAANVDTADIVERAHAGDALALEAVECFCAILGTFAGNLAVTLGALGGIYIGGGVVPKLGELFMRSPFRARFEAKGRFEAYLANIPTYLITAEYPAFLGVSAILAEQLSNRTGGASSAVFERIRQMRDALTPAERRVADLALNHPRSIINDPIVDIARKADVSQPTVIRFCRSLGCQGLSDFKLKLATGLTGTIPMSHSQVHLGDTATDFGAKVLDNTVSAILQLREHLNFEHVEQAIDILNNARRIEFYGLGNSNIVAQDAHYKFFRFGIPTIAYGDLYMQAASAALLGKGDVIVAVSKSGRAPELLRVLDVAMQAGAKVIAITSSNTPLAKRATVALETDHIEMRESQLSMISRILHLVMIDILAVGVAIRRAAPNAELAEAMARAKARAGASAGDEAADVLDWLSHGAAPAAKD.

The tract at residues 1 to 340 is glucokinase; it reads MSTGAQTKAA…QLSNRTGGAS (340 aa). 23 to 28 contributes to the ATP binding site; the sequence is ADVGGT. The 77-residue stretch at 341 to 417 folds into the HTH rpiR-type domain; the sequence is SAVFERIRQM…LKLATGLTGT (77 aa). The interval 341–641 is putative HTH-type transcriptional regulator; it reads SAVFERIRQM…SHGAAPAAKD (301 aa). The segment at residues 377 to 396 is a DNA-binding region (H-T-H motif); sequence IVDIARKADVSQPTVIRFCR. Residues 461-600 enclose the SIS domain; it reads AIDILNNARR…AVGVAIRRAA (140 aa). The chain crosses the membrane as a helical span at residues 576–596; sequence SMISRILHLVMIDILAVGVAI.

This sequence in the N-terminal section; belongs to the bacterial glucokinase family.

The protein localises to the membrane. The enzyme catalyses D-glucose + ATP = D-glucose 6-phosphate + ADP + H(+). The polypeptide is Bifunctional protein glk (glk) (Burkholderia pseudomallei (strain 1710b)).